Here is a 113-residue protein sequence, read N- to C-terminus: uncharacterized protein (113 aa).

An SWIM-type zinc finger spans residues 49 to 91 (FFVVVGKEEYVVEGGFCTCPDFLVNLKGKSPCAHIIAVEVAKI).

This is an uncharacterized protein from Archaeoglobus fulgidus (strain ATCC 49558 / DSM 4304 / JCM 9628 / NBRC 100126 / VC-16).